The chain runs to 285 residues: Protein HEXIM1 (285 aa).

Disordered stretches follow at residues 1 to 56 (MSEV…QNPG) and 132 to 196 (LMED…LQKD). Basic and acidic residues predominate over residues 23–36 (GGWHHPVEREEHPV). The segment covering 168 to 180 (TDDDLEEEEDEAG) has biased composition (acidic residues). A coiled-coil region spans residues 213–284 (SKQDLIKEYL…QEGKQVAADS (72 aa)).

This sequence belongs to the HEXIM family. As to quaternary structure, homooligomer and heterooligomer. Core component of the 7SK RNP complex.

The protein resides in the nucleus. Its subcellular location is the cytoplasm. Transcriptional regulator which functions as a general RNA polymerase II transcription inhibitor. Core component of the 7SK RNP complex: in cooperation with 7SK snRNA sequesters P-TEFb in a large inactive 7SK snRNP complex preventing RNA polymerase II phosphorylation and subsequent transcriptional elongation. Plays a role in the regulation of DNA virus-mediated innate immune response by assembling into the HDP-RNP complex, a complex that serves as a platform for IRF3 phosphorylation and subsequent innate immune response activation through the cGAS-STING pathway. The polypeptide is Protein HEXIM1 (hexim1) (Xenopus laevis (African clawed frog)).